The following is a 783-amino-acid chain: DNA ligase (783 aa).

NAD(+)-binding positions include 42 to 46 (DAEYD), 91 to 92 (SL), and glutamate 125. Lysine 127 serves as the catalytic N6-AMP-lysine intermediate. NAD(+)-binding residues include arginine 148, glutamate 185, lysine 302, and lysine 326. 4 residues coordinate Zn(2+): cysteine 421, cysteine 423, cysteine 445, and cysteine 451. The BRCT domain maps to 705-783 (KTDTAVAGKT…EDEWLELVAG (79 aa)).

It belongs to the NAD-dependent DNA ligase family. LigA subfamily. Requires Mg(2+) as cofactor. It depends on Mn(2+) as a cofactor.

The enzyme catalyses NAD(+) + (deoxyribonucleotide)n-3'-hydroxyl + 5'-phospho-(deoxyribonucleotide)m = (deoxyribonucleotide)n+m + AMP + beta-nicotinamide D-nucleotide.. Functionally, DNA ligase that catalyzes the formation of phosphodiester linkages between 5'-phosphoryl and 3'-hydroxyl groups in double-stranded DNA using NAD as a coenzyme and as the energy source for the reaction. It is essential for DNA replication and repair of damaged DNA. This Caulobacter vibrioides (strain ATCC 19089 / CIP 103742 / CB 15) (Caulobacter crescentus) protein is DNA ligase.